An 80-amino-acid chain; its full sequence is UPF0125 protein XF_2346 (80 aa).

It belongs to the UPF0125 (RnfH) family.

The chain is UPF0125 protein XF_2346 from Xylella fastidiosa (strain 9a5c).